Reading from the N-terminus, the 147-residue chain is Transmembrane protein 210 (147 aa).

A signal peptide spans 1-31 (MAPCPQPESCPAGSPLGLICLSLLLIPASAG). Residues 32–47 (TYCECSLGLSREALIA) lie on the Extracellular side of the membrane. Residues 48 to 68 (LIVVLAGVSASCFCALVVVAI) form a helical membrane-spanning segment. The Cytoplasmic segment spans residues 69–147 (GVFRAKGDTC…PPPPPPPLPQ (79 aa)). Positions 128–147 (TMTAPLEPPPPPPPPPPLPQ) are disordered. The span at 133-147 (LEPPPPPPPPPPLPQ) shows a compositional bias: pro residues.

The protein resides in the membrane. It is found in the cytoplasmic vesicle. It localises to the secretory vesicle. The protein localises to the acrosome. The sequence is that of Transmembrane protein 210 (Tmem210) from Mus musculus (Mouse).